A 225-amino-acid polypeptide reads, in one-letter code: Claudin-17 (225 aa).

Topologically, residues 1–7 are cytoplasmic; it reads MAFYPLQ. Residues 8–28 form a helical membrane-spanning segment; sequence IAGLVLGFLGMVGTLATTLLP. At 29 to 81 the chain is on the extracellular side; sequence QWRVSAFIGSNIIVFERIWEGLWMNCVRQAKARLQCKFYSSMLALSPALEAAR. The chain crosses the membrane as a helical span at residues 82 to 102; it reads ALMCVAVALSLIALIIGICGM. The Cytoplasmic segment spans residues 103–124; sequence KKIQCTGSNERAKAYLLGTSGV. Residues 125 to 145 form a helical membrane-spanning segment; that stretch reads LFILTGIFVLIPVCWTANIII. The Extracellular portion of the chain corresponds to 146 to 164; it reads RDFYNPAVHVGQKRELGAA. The helical transmembrane segment at 165–185 threads the bilayer; the sequence is LFLGWASVAVLFIAGGLLCGF. Residues 186 to 225 are Cytoplasmic-facing; sequence CCCNRKKQRDGYPAPRPSMPRTDERRRNMTRQSETPTSYV. Residues 194–225 are disordered; the sequence is RDGYPAPRPSMPRTDERRRNMTRQSETPTSYV. A compositionally biased stretch (polar residues) spans 215 to 225; the sequence is TRQSETPTSYV.

Belongs to the claudin family. Does not form homotypic polymeric strands and it is not sufficient to form tight junctions by its own. Interacts with OCLN.

The protein localises to the cell junction. It is found in the tight junction. The protein resides in the cell membrane. It catalyses the reaction chloride(in) = chloride(out). The catalysed reaction is hydrogencarbonate(in) = hydrogencarbonate(out). It carries out the reaction bromide(in) = bromide(out). The enzyme catalyses iodide(out) = iodide(in). It catalyses the reaction fluoride(in) = fluoride(out). The catalysed reaction is nitrate(in) = nitrate(out). It carries out the reaction thiocyanate(in) = thiocyanate(out). Functionally, channel-forming tight junction protein with selectivity for anions, including chloride and hydrogencarbonate, and for solutes smaller than 9 Angstrom in diameter. In the kidney proximal tubule, may be involved in quantitative reabsorption of filtered anions. Does not affect water permeability. In Sus scrofa (Pig), this protein is Claudin-17 (CLDN17).